The following is a 182-amino-acid chain: Ribosome maturation factor RimP (182 aa).

Belongs to the RimP family.

The protein localises to the cytoplasm. Its function is as follows. Required for maturation of 30S ribosomal subunits. The polypeptide is Ribosome maturation factor RimP (Chloroherpeton thalassium (strain ATCC 35110 / GB-78)).